We begin with the raw amino-acid sequence, 361 residues long: Probable dual-specificity RNA methyltransferase RlmN (361 aa).

The active-site Proton acceptor is Glu91. One can recognise a Radical SAM core domain in the interval 97-329 (QHYGLSVCVT…KKKGGNCVVR (233 aa)). A disulfide bridge connects residues Cys104 and Cys340. The [4Fe-4S] cluster site is built by Cys111, Cys115, and Cys118. S-adenosyl-L-methionine is bound by residues 163-164 (GE), Ser195, 218-220 (SLH), and Asn296. Cys340 (S-methylcysteine intermediate) is an active-site residue.

It belongs to the radical SAM superfamily. RlmN family. It depends on [4Fe-4S] cluster as a cofactor.

Its subcellular location is the cytoplasm. It catalyses the reaction adenosine(2503) in 23S rRNA + 2 reduced [2Fe-2S]-[ferredoxin] + 2 S-adenosyl-L-methionine = 2-methyladenosine(2503) in 23S rRNA + 5'-deoxyadenosine + L-methionine + 2 oxidized [2Fe-2S]-[ferredoxin] + S-adenosyl-L-homocysteine. The enzyme catalyses adenosine(37) in tRNA + 2 reduced [2Fe-2S]-[ferredoxin] + 2 S-adenosyl-L-methionine = 2-methyladenosine(37) in tRNA + 5'-deoxyadenosine + L-methionine + 2 oxidized [2Fe-2S]-[ferredoxin] + S-adenosyl-L-homocysteine. Functionally, specifically methylates position 2 of adenine 2503 in 23S rRNA and position 2 of adenine 37 in tRNAs. This is Probable dual-specificity RNA methyltransferase RlmN from Streptococcus pneumoniae serotype 2 (strain D39 / NCTC 7466).